A 113-amino-acid polypeptide reads, in one-letter code: Ribonuclease P protein component (113 aa).

It belongs to the RnpA family. In terms of assembly, consists of a catalytic RNA component (M1 or rnpB) and a protein subunit.

The enzyme catalyses Endonucleolytic cleavage of RNA, removing 5'-extranucleotides from tRNA precursor.. Its function is as follows. RNaseP catalyzes the removal of the 5'-leader sequence from pre-tRNA to produce the mature 5'-terminus. It can also cleave other RNA substrates such as 4.5S RNA. The protein component plays an auxiliary but essential role in vivo by binding to the 5'-leader sequence and broadening the substrate specificity of the ribozyme. The polypeptide is Ribonuclease P protein component (Finegoldia magna (strain ATCC 29328 / DSM 20472 / WAL 2508) (Peptostreptococcus magnus)).